We begin with the raw amino-acid sequence, 1091 residues long: Ubiquitin carboxyl-terminal hydrolase 36 (1091 aa).

Positions 115–152 are disordered; sequence ANGHDNNGRKLSDHPNQNHNHANPNGHHANPNELPKPK. Residues 128–146 are compositionally biased toward low complexity; the sequence is HPNQNHNHANPNGHHANPN. Residues 176–484 form the USP domain; sequence SGMINAGNTC…NAYIMFYELD (309 aa). The active-site Nucleophile is the Cys-185. The Proton acceptor role is filled by His-443. Phosphoserine occurs at positions 518 and 522. Disordered stretches follow at residues 523-572, 594-892, 972-1007, and 1068-1091; these read PAKF…KSPL, PTAN…ELLK, QRDL…GYNP, and LAAG…QQQS. Positions 547–572 are enriched in polar residues; the sequence is TTIQFKPQHQPSHQQNGVQQSAKSPL. Positions 594–612 are enriched in low complexity; that stretch reads PTANGNKSSSNHSNHKSVN. Basic and acidic residues predominate over residues 643-652; the sequence is KMDDCMDSGK. Over residues 653–667 the composition is skewed to low complexity; sequence PKSPVKTPVKTPLKS. Thr-659 and Thr-663 each carry phosphothreonine. A phosphoserine mark is found at Ser-673 and Ser-675. Over residues 691-702 the composition is skewed to basic and acidic residues; sequence RSSDSSDSEHEP. The segment covering 703–727 has biased composition (polar residues); it reads TTSSVQLNGHSKTNGSLSNGSSKST. Phosphoserine is present on Ser-749. A compositionally biased stretch (acidic residues) spans 749–759; the sequence is SEDDDDDEDEP. A compositionally biased stretch (low complexity) spans 769 to 780; sequence PQKQSQSQSRSG. Positions 781–790 are enriched in pro residues; it reads PPSPKTPPSP. Residue Ser-783 is modified to Phosphoserine. Thr-786 carries the phosphothreonine modification. Ser-789 carries the post-translational modification Phosphoserine. A compositionally biased stretch (acidic residues) spans 806 to 821; it reads DGDDDEDDDDDDDEVV. Residue Thr-829 is modified to Phosphothreonine. Polar residues-rich tracts occupy residues 838 to 850 and 863 to 886; these read FASS…SPTT and AIKT…NGGT. A Phosphoserine modification is found at Ser-847. A Phosphothreonine modification is found at Thr-850.

The protein belongs to the peptidase C19 family. Interacts with atms/PAF1, but not with CycT.

It localises to the nucleus. The protein resides in the nucleolus. The enzyme catalyses Thiol-dependent hydrolysis of ester, thioester, amide, peptide and isopeptide bonds formed by the C-terminal Gly of ubiquitin (a 76-residue protein attached to proteins as an intracellular targeting signal).. Required for maintaining multiple types of adult stem cells, including male and female germline, epithelial follicle cell and intestinal stem cells. May function as a transcriptional repressor by continually deubiquiting histone H2B at the promoters of genes critical for cellular differentiation, thereby preventing histone H3 'Lys-4' trimethylation (H3K4). Controls selective autophagy activation by ubiquitinated proteins. The sequence is that of Ubiquitin carboxyl-terminal hydrolase 36 (Usp36) from Drosophila ananassae (Fruit fly).